We begin with the raw amino-acid sequence, 674 residues long: DNA ligase (674 aa).

Residues 35-39 (DFEFD), 84-85 (SL), and Glu-118 contribute to the NAD(+) site. The N6-AMP-lysine intermediate role is filled by Lys-120. The NAD(+) site is built by Arg-141, Glu-184, Lys-297, and Lys-321. Zn(2+) is bound by residues Cys-415, Cys-418, Cys-433, and Cys-439. Residues 598-674 (QVNRNFEGVT…VSEDEFEAML (77 aa)) form the BRCT domain.

The protein belongs to the NAD-dependent DNA ligase family. LigA subfamily. Mg(2+) is required as a cofactor. The cofactor is Mn(2+).

The enzyme catalyses NAD(+) + (deoxyribonucleotide)n-3'-hydroxyl + 5'-phospho-(deoxyribonucleotide)m = (deoxyribonucleotide)n+m + AMP + beta-nicotinamide D-nucleotide.. Functionally, DNA ligase that catalyzes the formation of phosphodiester linkages between 5'-phosphoryl and 3'-hydroxyl groups in double-stranded DNA using NAD as a coenzyme and as the energy source for the reaction. It is essential for DNA replication and repair of damaged DNA. The protein is DNA ligase of Pelodictyon phaeoclathratiforme (strain DSM 5477 / BU-1).